Consider the following 519-residue polypeptide: Glutamate--cysteine ligase (519 aa).

Belongs to the glutamate--cysteine ligase type 1 family. Type 1 subfamily.

The enzyme catalyses L-cysteine + L-glutamate + ATP = gamma-L-glutamyl-L-cysteine + ADP + phosphate + H(+). It functions in the pathway sulfur metabolism; glutathione biosynthesis; glutathione from L-cysteine and L-glutamate: step 1/2. The sequence is that of Glutamate--cysteine ligase from Edwardsiella ictaluri (strain 93-146).